We begin with the raw amino-acid sequence, 164 residues long: Glycine cleavage system H protein, mitochondrial (164 aa).

A mitochondrion-targeting transit peptide spans 1–39; sequence MAWLVLRRLGPVLAPRCPRLSLRPQVPAVRRLGTGSLLL. The region spanning 57-139 is the Lipoyl-binding domain; that stretch reads IGTVGISNFA…YQDGWLIKMT (83 aa). Lys98 is modified (N6-lipoyllysine).

The protein belongs to the GcvH family. In terms of assembly, the glycine cleavage system is composed of four proteins: P (GLDC), T (GCST), L (DLD) and H (GCSH). Interacts with GLDC. (R)-lipoate is required as a cofactor.

The protein localises to the mitochondrion. The glycine cleavage system catalyzes the degradation of glycine. The H protein (GCSH) shuttles the methylamine group of glycine from the P protein (GLDC) to the T protein (GCST). Has a pivotal role in the lipoylation of enzymes involved in cellular energetics such as the mitochondrial dihydrolipoyllysine-residue acetyltransferase component of pyruvate dehydrogenase complex (DLAT), and the mitochondrial dihydrolipoyllysine-residue succinyltransferase component of 2-oxoglutarate dehydrogenase complex (DLST). This is Glycine cleavage system H protein, mitochondrial from Gallus gallus (Chicken).